The sequence spans 262 residues: Ribose-5-phosphate isomerase A (262 aa).

Residues threonine 33 to threonine 36, aspartate 89 to aspartate 92, and lysine 102 to glycine 105 each bind substrate. The Proton acceptor role is filled by glutamate 111. Lysine 129 contributes to the substrate binding site.

It belongs to the ribose 5-phosphate isomerase family. As to quaternary structure, homodimer.

It catalyses the reaction aldehydo-D-ribose 5-phosphate = D-ribulose 5-phosphate. It participates in carbohydrate degradation; pentose phosphate pathway; D-ribose 5-phosphate from D-ribulose 5-phosphate (non-oxidative stage): step 1/1. Catalyzes the reversible conversion of ribose-5-phosphate to ribulose 5-phosphate. This is Ribose-5-phosphate isomerase A from Jannaschia sp. (strain CCS1).